The primary structure comprises 667 residues: DNA ligase (667 aa).

Residues 32-36 (DSEYD), 81-82 (SL), and E110 each bind NAD(+). K112 (N6-AMP-lysine intermediate) is an active-site residue. NAD(+) is bound by residues R133, E167, K283, and K307. Positions 401, 404, 419, and 424 each coordinate Zn(2+). The 82-residue stretch at 586 to 667 (EGHPEFSGKT…FVDKQNELNS (82 aa)) folds into the BRCT domain.

It belongs to the NAD-dependent DNA ligase family. LigA subfamily. The cofactor is Mg(2+). Requires Mn(2+) as cofactor.

The enzyme catalyses NAD(+) + (deoxyribonucleotide)n-3'-hydroxyl + 5'-phospho-(deoxyribonucleotide)m = (deoxyribonucleotide)n+m + AMP + beta-nicotinamide D-nucleotide.. DNA ligase that catalyzes the formation of phosphodiester linkages between 5'-phosphoryl and 3'-hydroxyl groups in double-stranded DNA using NAD as a coenzyme and as the energy source for the reaction. It is essential for DNA replication and repair of damaged DNA. The sequence is that of DNA ligase from Staphylococcus aureus (strain Mu3 / ATCC 700698).